A 130-amino-acid chain; its full sequence is Large ribosomal subunit protein bL20 (130 aa).

This sequence belongs to the bacterial ribosomal protein bL20 family.

In terms of biological role, binds directly to 23S ribosomal RNA and is necessary for the in vitro assembly process of the 50S ribosomal subunit. It is not involved in the protein synthesizing functions of that subunit. This chain is Large ribosomal subunit protein bL20, found in Salinispora arenicola (strain CNS-205).